Consider the following 153-residue polypeptide: Sec-independent protein translocase protein TatB (153 aa).

Residues 1-21 traverse the membrane as a helical segment; sequence MFGISFSELLLVGLVALLVLG. A disordered region spans residues 78–153; the sequence is MFAQNQHPET…HDSSLPPRAP (76 aa).

Belongs to the TatB family. In terms of assembly, the Tat system comprises two distinct complexes: a TatABC complex, containing multiple copies of TatA, TatB and TatC subunits, and a separate TatA complex, containing only TatA subunits. Substrates initially bind to the TatABC complex, which probably triggers association of the separate TatA complex to form the active translocon.

The protein localises to the cell inner membrane. Its function is as follows. Part of the twin-arginine translocation (Tat) system that transports large folded proteins containing a characteristic twin-arginine motif in their signal peptide across membranes. Together with TatC, TatB is part of a receptor directly interacting with Tat signal peptides. TatB may form an oligomeric binding site that transiently accommodates folded Tat precursor proteins before their translocation. In Pseudomonas savastanoi pv. phaseolicola (strain 1448A / Race 6) (Pseudomonas syringae pv. phaseolicola (strain 1448A / Race 6)), this protein is Sec-independent protein translocase protein TatB.